A 215-amino-acid polypeptide reads, in one-letter code: Nascent polypeptide-associated complex subunit alpha (215 aa).

The segment at 1–81 (MPGEATETVP…SEKKARKAMS (81 aa)) is disordered. Residues 9–21 (VPVTEQEMQQPQV) show a composition bias toward polar residues. Residues 29 to 42 (SDSDDSVPELEEQD) are compositionally biased toward acidic residues. The segment covering 43 to 57 (SAQTQTQQAQLAAAA) has biased composition (low complexity). The NAC-A/B domain occupies 70 to 135 (SRSEKKARKA…AKIEDLSQQA (66 aa)). The UBA domain maps to 176–213 (VEVKDIELVMSQANVSRAKAVRALKNNNNDIVNAIMEL).

Belongs to the NAC-alpha family.

Functionally, may promote appropriate targeting of ribosome-nascent polypeptide complexes. The chain is Nascent polypeptide-associated complex subunit alpha (naca) from Oreochromis niloticus (Nile tilapia).